A 121-amino-acid polypeptide reads, in one-letter code: Large ribosomal subunit protein bL19 (121 aa).

This sequence belongs to the bacterial ribosomal protein bL19 family.

Functionally, this protein is located at the 30S-50S ribosomal subunit interface and may play a role in the structure and function of the aminoacyl-tRNA binding site. This Symbiobacterium thermophilum (strain DSM 24528 / JCM 14929 / IAM 14863 / T) protein is Large ribosomal subunit protein bL19.